The chain runs to 434 residues: Alpha-enolase (434 aa).

S2 carries the N-acetylserine modification. K5 is modified (N6-acetyllysine). S27 is modified (phosphoserine). Position 40 (S40) interacts with Mg(2+). Residue Y44 is modified to Phosphotyrosine. K60 carries the post-translational modification N6-acetyllysine; alternate. K60 is modified (N6-succinyllysine; alternate). Residues K64 and K71 each carry the N6-acetyllysine modification. K89 carries the N6-acetyllysine; alternate modification. K89 carries the post-translational modification N6-succinyllysine; alternate. N6-acetyllysine is present on residues K92 and K126. H158 and E167 together coordinate substrate. An N6-acetyllysine mark is found at K193 and K199. At K202 the chain carries N6-acetyllysine; alternate. Residue K202 forms a Glycyl lysine isopeptide (Lys-Gly) (interchain with G-Cter in SUMO2); alternate linkage. E210 serves as the catalytic Proton donor. 2 positions are modified to N6-acetyllysine; alternate: K228 and K233. K228 is modified (N6-succinyllysine; alternate). At K228 the chain carries N6-(2-hydroxyisobutyryl)lysine; alternate. K233 is modified (N6-malonyllysine; alternate). D245 lines the Mg(2+) pocket. S254 carries the post-translational modification Phosphoserine. K256 bears the N6-acetyllysine mark. Phosphoserine is present on residues S263 and S272. K281 is modified (N6-acetyllysine; alternate). K281 bears the N6-(2-hydroxyisobutyryl)lysine; alternate mark. Position 285 is an N6-acetyllysine (K285). Phosphotyrosine is present on Y287. The residue at position 291 (S291) is a Phosphoserine. Mg(2+)-binding residues include E293 and D318. 2 residues coordinate substrate: E293 and D318. N6-acetyllysine occurs at positions 335 and 343. K343 (proton acceptor) is an active-site residue. Residues 370–373 and K394 contribute to the substrate site; that span reads SHRS. Residues 405–434 form a required for interaction with PLG region; sequence AKYNQLLRIEEELGSKAKFAGRNFRNPLAK. An N6-acetyllysine modification is found at K406. K420 carries the N6-acetyllysine; alternate modification. Residue K420 is modified to N6-succinyllysine; alternate. K420 carries the post-translational modification N6-malonyllysine; alternate.

This sequence belongs to the enolase family. Mammalian enolase is composed of 3 isozyme subunits, alpha, beta and gamma, which can form homodimers or heterodimers which are cell-type and development-specific. ENO1 interacts with PLG in the neuronal plasma membrane and promotes its activation. The C-terminal lysine is required for this binding. Interacts with ENO4 and PGAM2. Interacts with CMTM6. The cofactor is Mg(2+). Post-translationally, ISGylated. Lysine 2-hydroxyisobutyrylation (Khib) by p300/EP300 activates the phosphopyruvate hydratase activity.

It localises to the cytoplasm. It is found in the cell membrane. The enzyme catalyses (2R)-2-phosphoglycerate = phosphoenolpyruvate + H2O. Its pathway is carbohydrate degradation; glycolysis; pyruvate from D-glyceraldehyde 3-phosphate: step 4/5. Glycolytic enzyme the catalyzes the conversion of 2-phosphoglycerate to phosphoenolpyruvate. In addition to glycolysis, involved in various processes such as growth control, hypoxia tolerance and allergic responses. May also function in the intravascular and pericellular fibrinolytic system due to its ability to serve as a receptor and activator of plasminogen on the cell surface of several cell-types such as leukocytes and neurons. Stimulates immunoglobulin production. In Macaca fascicularis (Crab-eating macaque), this protein is Alpha-enolase (ENO1).